The primary structure comprises 178 residues: Large ribosomal subunit protein bL17 (178 aa).

A disordered region spans residues 150 to 178 (PADEPVVAEENAPQSAVKDAVDECEGKAD). A compositionally biased stretch (basic and acidic residues) spans 168-178 (DAVDECEGKAD).

This sequence belongs to the bacterial ribosomal protein bL17 family. In terms of assembly, part of the 50S ribosomal subunit. Contacts protein L32.

The sequence is that of Large ribosomal subunit protein bL17 from Geobacter metallireducens (strain ATCC 53774 / DSM 7210 / GS-15).